A 218-amino-acid chain; its full sequence is Ribose-5-phosphate isomerase A (218 aa).

Residues 28-31 (SGST), 81-84 (DGAD), and 94-97 (KGKG) contribute to the substrate site. Glu103 (proton acceptor) is an active-site residue. A substrate-binding site is contributed by Lys121.

It belongs to the ribose 5-phosphate isomerase family. In terms of assembly, homodimer.

The catalysed reaction is aldehydo-D-ribose 5-phosphate = D-ribulose 5-phosphate. The protein operates within carbohydrate degradation; pentose phosphate pathway; D-ribose 5-phosphate from D-ribulose 5-phosphate (non-oxidative stage): step 1/1. Catalyzes the reversible conversion of ribose-5-phosphate to ribulose 5-phosphate. The chain is Ribose-5-phosphate isomerase A from Wigglesworthia glossinidia brevipalpis.